Here is a 255-residue protein sequence, read N- to C-terminus: Aliphatic sulfonates import ATP-binding protein SsuB (255 aa).

An ABC transporter domain is found at 12-233 (LLLNAVSKHY…RLGSVRLAEL (222 aa)). 44 to 51 (GRSGGGKS) lines the ATP pocket.

The protein belongs to the ABC transporter superfamily. Aliphatic sulfonates importer (TC 3.A.1.17.2) family. The complex is composed of two ATP-binding proteins (SsuB), two transmembrane proteins (SsuC) and a solute-binding protein (SsuA).

The protein localises to the cell inner membrane. It catalyses the reaction ATP + H2O + aliphatic sulfonate-[sulfonate-binding protein]Side 1 = ADP + phosphate + aliphatic sulfonateSide 2 + [sulfonate-binding protein]Side 1.. In terms of biological role, part of the ABC transporter complex SsuABC involved in aliphatic sulfonates import. Responsible for energy coupling to the transport system. This Escherichia coli O6:K15:H31 (strain 536 / UPEC) protein is Aliphatic sulfonates import ATP-binding protein SsuB.